The sequence spans 707 residues: Polyribonucleotide nucleotidyltransferase (707 aa).

Residues aspartate 486 and aspartate 492 each coordinate Mg(2+). The KH domain occupies 553-612 (PRIHIIKINPEKIKDVIGKGGSVIRMLTEETGTIIEIEDDGTVKISSTVKEKAKNAIRRI). Positions 622-690 (GRIYSGKVTR…RQGRLRLSIK (69 aa)) constitute an S1 motif domain.

The protein belongs to the polyribonucleotide nucleotidyltransferase family. Component of the RNA degradosome, which is a multiprotein complex involved in RNA processing and mRNA degradation. The cofactor is Mg(2+).

The protein localises to the cytoplasm. It carries out the reaction RNA(n+1) + phosphate = RNA(n) + a ribonucleoside 5'-diphosphate. Involved in mRNA degradation. Catalyzes the phosphorolysis of single-stranded polyribonucleotides processively in the 3'- to 5'-direction. The polypeptide is Polyribonucleotide nucleotidyltransferase (Buchnera aphidicola subsp. Acyrthosiphon pisum (strain 5A)).